Reading from the N-terminus, the 854-residue chain is Probable disease resistance protein At1g51480 (854 aa).

The stretch at 25 to 62 forms a coiled coil; sequence RNYIHKMEANLDDLHTTMEELKNGRDDLLRRVSIEEDK. Positions 138-441 constitute an NB-ARC domain; it reads AHKIPVPKVE…CEGYINPNRY (304 aa). Residue 180 to 187 participates in ATP binding; it reads GMGGVGKT. LRR repeat units follow at residues 514–535, 536–557, 560–582, 584–605, 607–629, and 631–652; these read IVRQ…SKCS, NLST…FFLF, KLVV…ISNL, SLQY…MKKL, KLIY…SATL, and NLQV…MEEL.

Belongs to the disease resistance NB-LRR family.

Functionally, probable disease resistance protein. The sequence is that of Probable disease resistance protein At1g51480 from Arabidopsis thaliana (Mouse-ear cress).